We begin with the raw amino-acid sequence, 163 residues long: MRVGLYPGTFDPVTNGHLDIIGRAVKLVDKLVIGVAINIGKGPLFSLEERVEILERETAHLKKIAEIEVRPFDSLLMHFARDVNAQMIVRGLRAVADFEYEFQMTAMNQQLDREIETVFLMADPRHQAIASRLVKEIATLGGDIGKFVPPGVAQQLLAKVGKG.

Position 9 (T9) interacts with substrate. ATP contacts are provided by residues 9–10 and H17; that span reads TF. K41, L76, and R90 together coordinate substrate. ATP-binding positions include 91 to 93, E101, and 126 to 132; these read GLR and HQAIASR.

Belongs to the bacterial CoaD family. As to quaternary structure, homohexamer. Mg(2+) is required as a cofactor.

Its subcellular location is the cytoplasm. The catalysed reaction is (R)-4'-phosphopantetheine + ATP + H(+) = 3'-dephospho-CoA + diphosphate. Its pathway is cofactor biosynthesis; coenzyme A biosynthesis; CoA from (R)-pantothenate: step 4/5. In terms of biological role, reversibly transfers an adenylyl group from ATP to 4'-phosphopantetheine, yielding dephospho-CoA (dPCoA) and pyrophosphate. The polypeptide is Phosphopantetheine adenylyltransferase (Caulobacter vibrioides (strain ATCC 19089 / CIP 103742 / CB 15) (Caulobacter crescentus)).